The primary structure comprises 261 residues: Kallikrein 1-related peptidase b1 (261 aa).

The N-terminal stretch at 1–18 is a signal peptide; it reads MWFLILFLALSLGGIDAA. Residues 19–24 constitute a propeptide, activation peptide; it reads PPVQSR. One can recognise a Peptidase S1 domain in the interval 25–258; the sequence is IVGGFKCEKN…FTSWIKDTLA (234 aa). 5 cysteine pairs are disulfide-bonded: Cys-31–Cys-173, Cys-50–Cys-66, Cys-152–Cys-219, Cys-184–Cys-198, and Cys-209–Cys-234. The active-site Charge relay system is the His-65. An N-linked (GlcNAc...) asparagine glycan is attached at Asn-102. The Charge relay system role is filled by Asp-120. Ser-213 acts as the Charge relay system in catalysis.

It belongs to the peptidase S1 family. Kallikrein subfamily.

The catalysed reaction is Preferential cleavage of Arg-|-Xaa bonds in small molecule substrates. Highly selective action to release kallidin (lysyl-bradykinin) from kininogen involves hydrolysis of Met-|-Xaa or Leu-|-Xaa.. In terms of biological role, glandular kallikreins cleave Met-Lys and Arg-Ser bonds in kininogen to release Lys-bradykinin. The polypeptide is Kallikrein 1-related peptidase b1 (Klk1b1) (Mus musculus (Mouse)).